The primary structure comprises 60 residues: Large ribosomal subunit protein bL32 (60 aa).

The tract at residues 1–21 (MAVPARHTSKAKKNKRRTHYK) is disordered. The span at 7-20 (HTSKAKKNKRRTHY) shows a compositional bias: basic residues.

It belongs to the bacterial ribosomal protein bL32 family.

In Streptococcus thermophilus (strain ATCC BAA-250 / LMG 18311), this protein is Large ribosomal subunit protein bL32.